A 398-amino-acid chain; its full sequence is NADH-quinone oxidoreductase subunit D (398 aa).

The protein belongs to the complex I 49 kDa subunit family. As to quaternary structure, NDH-1 is composed of 14 different subunits. Subunits NuoB, C, D, E, F, and G constitute the peripheral sector of the complex.

It localises to the cell inner membrane. The catalysed reaction is a quinone + NADH + 5 H(+)(in) = a quinol + NAD(+) + 4 H(+)(out). Functionally, NDH-1 shuttles electrons from NADH, via FMN and iron-sulfur (Fe-S) centers, to quinones in the respiratory chain. The immediate electron acceptor for the enzyme in this species is believed to be ubiquinone. Couples the redox reaction to proton translocation (for every two electrons transferred, four hydrogen ions are translocated across the cytoplasmic membrane), and thus conserves the redox energy in a proton gradient. In Caulobacter vibrioides (strain ATCC 19089 / CIP 103742 / CB 15) (Caulobacter crescentus), this protein is NADH-quinone oxidoreductase subunit D.